Here is a 147-residue protein sequence, read N- to C-terminus: Ubiquitin-like-conjugating enzyme ATG10 (147 aa).

The Glycyl thioester intermediate role is filled by C116.

The protein belongs to the ATG10 family. As to quaternary structure, forms homooligomers. Interacts with ATG10. Interacts with ATG7 and ATG12.

It localises to the preautophagosomal structure membrane. Functionally, E2-like enzyme required for the cytoplasm to vacuole transport (Cvt), autophagy and nucleophagy. Acts as an E2-like enzyme that catalyzes the conjugation of ATG12 to ATG5. ATG12 conjugation to ATG5 is required for proper localization of ATG8 to the preautophagosomal structure (PAS). Likely serves as an ATG5-recognition molecule. In Kluyveromyces marxianus (strain DMKU3-1042 / BCC 29191 / NBRC 104275) (Yeast), this protein is Ubiquitin-like-conjugating enzyme ATG10.